An 872-amino-acid chain; its full sequence is Cadherin-1 (872 aa).

Residues Met-1–Ala-25 form the signal peptide. The propeptide occupies Glu-26–Arg-148. Cadherin domains lie at Arg-148–Phe-256, Thr-257–Phe-370, Asp-371–Phe-481, Leu-482–Leu-589, and Val-605–Glu-688. Over Asp-149 to Ala-701 the chain is Extracellular. N-linked (GlcNAc...) asparagine glycosylation is present at Asn-209. Residues Asp-251 and Asp-282 each contribute to the Ca(2+) site. Asn-456, Asn-552, Asn-631, and Asn-669 each carry an N-linked (GlcNAc...) asparagine glycan. A helical transmembrane segment spans residues Ile-702–Phe-722. Residues Val-723–Asp-872 are Cytoplasmic-facing. The disordered stretch occupies residues Glu-739 to Asp-758. Residues Tyr-747–Asp-758 are compositionally biased toward acidic residues.

Homodimer. As to expression, abundantly expressed in intestine, stomach, liver, kidney, skin and eye. Also expressed in heart, lung, testis, ovary, muscle and brain.

The protein localises to the cell junction. The protein resides in the adherens junction. Its subcellular location is the cell membrane. It localises to the endosome. It is found in the golgi apparatus. The protein localises to the trans-Golgi network. The protein resides in the cytoplasm. Its subcellular location is the desmosome. Its function is as follows. Cadherins are calcium-dependent cell adhesion proteins. They preferentially interact with themselves in a homophilic manner in connecting cells; cadherins may thus contribute to the sorting of heterogeneous cell types. Promotes organization of radial actin fiber structure and cellular response to contractile forces, via anchoring of radial actin fibers to CDH1 junction complexes at the cell membrane. E-cadherin is a ligand for integrin alpha-E/beta-7. This is Cadherin-1 (cdh1) from Xenopus laevis (African clawed frog).